The chain runs to 38 residues: MKVRASVKKMCDKCRVIRRRGRVMVICSANPKHKQRQG.

Belongs to the bacterial ribosomal protein bL36 family.

The protein is Large ribosomal subunit protein bL36 of Synechocystis sp. (strain ATCC 27184 / PCC 6803 / Kazusa).